The chain runs to 293 residues: MRIKVRAPATIANFGPGFDVFGMAIDKPFDEVVVEEFNEFEIISSGYPVPNGEDNIALFSAKTLFKMLNIEGGLRIKLKKGIRPKSGLGSSGASAVAGALGAAKLLGVSNDELILKAAMKGEEKASGEPHPDNVVPSYYGGFTVIESKSPLRVHFVDAKLRGVVVLPEVEIPTAKARKILPSMVPLKDAVKNIAMASSLILALKEGDLETIGRLLDDNLALPYRKKLMPWFDEIRRVALETGAYGITVSGSGPALFAIGENLKDIGKTIVEKFEELGIKAEYWVTKTGRGAKT.

An ATP-binding site is contributed by 83-93 (RPKSGLGSSGA).

It belongs to the GHMP kinase family. Homoserine kinase subfamily.

It localises to the cytoplasm. The enzyme catalyses L-homoserine + ATP = O-phospho-L-homoserine + ADP + H(+). Its pathway is amino-acid biosynthesis; L-threonine biosynthesis; L-threonine from L-aspartate: step 4/5. Catalyzes the ATP-dependent phosphorylation of L-homoserine to L-homoserine phosphate. The protein is Homoserine kinase of Pyrococcus horikoshii (strain ATCC 700860 / DSM 12428 / JCM 9974 / NBRC 100139 / OT-3).